The chain runs to 308 residues: UDP-N-acetylenolpyruvoylglucosamine reductase (308 aa).

An FAD-binding PCMH-type domain is found at 37 to 201; it reads RVGGPAQVLF…TQATFRGTPG (165 aa). Arg-181 is a catalytic residue. Over residues 216–233 the composition is skewed to polar residues; that stretch reads SREATQPIKSRTGGSTFK. The tract at residues 216–236 is disordered; the sequence is SREATQPIKSRTGGSTFKNPP. Residue Ser-230 is the Proton donor of the active site. Glu-300 is a catalytic residue.

It belongs to the MurB family. It depends on FAD as a cofactor.

The protein localises to the cytoplasm. The enzyme catalyses UDP-N-acetyl-alpha-D-muramate + NADP(+) = UDP-N-acetyl-3-O-(1-carboxyvinyl)-alpha-D-glucosamine + NADPH + H(+). It participates in cell wall biogenesis; peptidoglycan biosynthesis. Functionally, cell wall formation. The chain is UDP-N-acetylenolpyruvoylglucosamine reductase from Azorhizobium caulinodans (strain ATCC 43989 / DSM 5975 / JCM 20966 / LMG 6465 / NBRC 14845 / NCIMB 13405 / ORS 571).